The primary structure comprises 143 residues: Transcriptional regulator MraZ (143 aa).

SpoVT-AbrB domains follow at residues 5–47 (EYQH…PQEE) and 76–119 (ASEC…SKSE).

The protein belongs to the MraZ family. In terms of assembly, forms oligomers.

The protein localises to the cytoplasm. It localises to the nucleoid. In Listeria monocytogenes serotype 4b (strain CLIP80459), this protein is Transcriptional regulator MraZ.